A 154-amino-acid chain; its full sequence is Ribosome maturation factor RimP (154 aa).

The protein belongs to the RimP family.

It localises to the cytoplasm. In terms of biological role, required for maturation of 30S ribosomal subunits. The chain is Ribosome maturation factor RimP from Clostridium kluyveri (strain ATCC 8527 / DSM 555 / NBRC 12016 / NCIMB 10680 / K1).